The following is a 227-amino-acid chain: Probable proteasome subunit beta type-2 (227 aa).

Positions 1-6 are cleaved as a propeptide — removed in mature form; it reads MITKTG. Residue Thr-7 is the Nucleophile of the active site.

This sequence belongs to the peptidase T1B family. As to quaternary structure, the 26S proteasome consists of a 20S proteasome core and two 19S regulatory subunits. The 20S proteasome core is composed of 28 subunits that are arranged in four stacked rings, resulting in a barrel-shaped structure. The two end rings are each formed by seven alpha subunits, and the two central rings are each formed by seven beta subunits. The catalytic chamber with the active sites is on the inside of the barrel.

It localises to the cytoplasm. The protein resides in the nucleus. It catalyses the reaction Cleavage of peptide bonds with very broad specificity.. Functionally, the proteasome degrades poly-ubiquitinated proteins in the cytoplasm and in the nucleus. It is essential for the regulated turnover of proteins and for the removal of misfolded proteins. The proteasome is a multicatalytic proteinase complex that is characterized by its ability to cleave peptides with Arg, Phe, Tyr, Leu, and Glu adjacent to the leaving group at neutral or slightly basic pH. It has an ATP-dependent proteolytic activity. The polypeptide is Probable proteasome subunit beta type-2 (PUP1) (Encephalitozoon cuniculi (strain GB-M1) (Microsporidian parasite)).